The primary structure comprises 574 residues: Splicing factor U2af large subunit A (574 aa).

The segment at 1 to 180 (MAEHEEQPYE…SKRVSGFDQG (180 aa)) is disordered. Residues 18–41 (PAPASAYAEYPAPEGSPPAAAAKP) are compositionally biased toward low complexity. Positions 53-143 (RSQHETQPHD…ERRRDRDRDG (91 aa)) are enriched in basic and acidic residues. The span at 144–172 (HRRHRSRSRSPSKGRDRRSRSRSRSRSSK) shows a compositional bias: basic residues. 3 consecutive RRM domains span residues 238–321 (RRVY…RPTD), 358–436 (DRIF…RANQ), and 479–565 (QVVS…YPED).

The protein belongs to the splicing factor SR family.

It is found in the nucleus. Its function is as follows. Necessary for the splicing of pre-mRNA. In Oryza sativa subsp. japonica (Rice), this protein is Splicing factor U2af large subunit A (U2AF65A).